Reading from the N-terminus, the 273-residue chain is Probable ribosomal RNA small subunit methyltransferase A (273 aa).

Residues N23, L25, G50, E71, D95, and N110 each contribute to the S-adenosyl-L-methionine site.

This sequence belongs to the class I-like SAM-binding methyltransferase superfamily. rRNA adenine N(6)-methyltransferase family. RsmA subfamily.

It localises to the cytoplasm. Functionally, specifically dimethylates two adjacent adenosines in the loop of a conserved hairpin near the 3'-end of 16S rRNA in the 30S particle. May play a critical role in biogenesis of 30S subunits. This is Probable ribosomal RNA small subunit methyltransferase A from Pyrococcus furiosus (strain ATCC 43587 / DSM 3638 / JCM 8422 / Vc1).